The sequence spans 167 residues: Photosystem I assembly protein Ycf3 (167 aa).

TPR repeat units follow at residues 35-68 (AFAYYRDGMSAQAEGEYAEALQNYYEAMRLEVDA), 72-105 (SYILYNIGLIHTSNGEHAKALEYYYQAIERNPSL), and 120-153 (GEQAIEEGNSEAAEILFDQAASYWKQAIRLAPTS).

This sequence belongs to the Ycf3 family.

Its subcellular location is the plastid. It is found in the chloroplast thylakoid membrane. Its function is as follows. Essential for the assembly of the photosystem I (PSI) complex. May act as a chaperone-like factor to guide the assembly of the PSI subunits. The protein is Photosystem I assembly protein Ycf3 of Chlorokybus atmophyticus (Soil alga).